The primary structure comprises 281 residues: Nuclear receptor-interacting protein 2 (281 aa).

A disordered region spans residues 18-85 (ESCSTGQRQA…RAHLSQQRRL (68 aa)). Positions 36 to 47 (TPPPSSPWPTPP) are enriched in pro residues. Basic and acidic residues predominate over residues 55-78 (QEARRDEGEARTRGQEAQLRDRAH). Residues 244–248 (LQTLL) carry the LXXLL motif motif.

Interacts with NR1F2, RARA and THRB in a ligand-dependent manner.

It is found in the nucleus. Its function is as follows. Down-regulates transcriptional activation by nuclear receptors such as NR1F2. The sequence is that of Nuclear receptor-interacting protein 2 (NRIP2) from Homo sapiens (Human).